We begin with the raw amino-acid sequence, 567 residues long: Dihydroxy-acid dehydratase (567 aa).

A [2Fe-2S] cluster-binding site is contributed by C57. D89 lines the Mg(2+) pocket. C130 is a [2Fe-2S] cluster binding site. Mg(2+) contacts are provided by D131 and K132. K132 carries the post-translational modification N6-carboxylysine. C202 is a binding site for [2Fe-2S] cluster. E453 contacts Mg(2+). Catalysis depends on S479, which acts as the Proton acceptor.

Belongs to the IlvD/Edd family. As to quaternary structure, homodimer. Requires [2Fe-2S] cluster as cofactor. Mg(2+) is required as a cofactor.

The enzyme catalyses (2R)-2,3-dihydroxy-3-methylbutanoate = 3-methyl-2-oxobutanoate + H2O. It carries out the reaction (2R,3R)-2,3-dihydroxy-3-methylpentanoate = (S)-3-methyl-2-oxopentanoate + H2O. The protein operates within amino-acid biosynthesis; L-isoleucine biosynthesis; L-isoleucine from 2-oxobutanoate: step 3/4. It participates in amino-acid biosynthesis; L-valine biosynthesis; L-valine from pyruvate: step 3/4. Its function is as follows. Functions in the biosynthesis of branched-chain amino acids. Catalyzes the dehydration of (2R,3R)-2,3-dihydroxy-3-methylpentanoate (2,3-dihydroxy-3-methylvalerate) into 2-oxo-3-methylpentanoate (2-oxo-3-methylvalerate) and of (2R)-2,3-dihydroxy-3-methylbutanoate (2,3-dihydroxyisovalerate) into 2-oxo-3-methylbutanoate (2-oxoisovalerate), the penultimate precursor to L-isoleucine and L-valine, respectively. The polypeptide is Dihydroxy-acid dehydratase (Nocardioides sp. (strain ATCC BAA-499 / JS614)).